Reading from the N-terminus, the 61-residue chain is Double gene block protein 1 (61 aa).

The interval 1–45 is disordered; the sequence is MDIESEVPVVGKQMLAGNRGKQKTRRSVAKDAIRKPASDSTNGGN. The RNA-binding stretch occupies residues 17 to 35; sequence GNRGKQKTRRSVAKDAIRK. Residues 28–37 show a composition bias toward basic and acidic residues; sequence VAKDAIRKPA.

It belongs to the carmovirus double gene block protein 1 family. Homodimer.

Its function is as follows. Cell-to-cell movement. Displays RNA-binding activity. The sequence is that of Double gene block protein 1 from Carnation mottle virus (CarMV).